The chain runs to 508 residues: uncharacterized protein (508 aa).

Residues 7 to 29 (ALAIVLALILSLALPELLFQLYP) traverse the membrane as a helical segment.

Its subcellular location is the membrane. This is an uncharacterized protein from Archaeoglobus fulgidus (strain ATCC 49558 / DSM 4304 / JCM 9628 / NBRC 100126 / VC-16).